Here is a 203-residue protein sequence, read N- to C-terminus: Signal peptidase I (203 aa).

The tract at residues 1–26 is disordered; the sequence is MSSESDSPTPQTPPAQPAASQPKADS. At 1–33 the chain is on the cytoplasmic side; that stretch reads MSSESDSPTPQTPPAQPAASQPKADSPLMEGIK. Positions 17–26 are enriched in low complexity; sequence PAASQPKADS. Residues 34-50 traverse the membrane as a helical segment; that stretch reads TIGLSVVLALGIRTFVA. Residues 51–203 are Extracellular-facing; the sequence is EARYIPSESM…LGELGPPPSY (153 aa). Residues S59 and K109 contribute to the active site.

This sequence belongs to the peptidase S26 family.

The protein resides in the cell membrane. The catalysed reaction is Cleavage of hydrophobic, N-terminal signal or leader sequences from secreted and periplasmic proteins.. In Leptolyngbya laminosa (Phormidium laminosum), this protein is Signal peptidase I (lepB).